Reading from the N-terminus, the 203-residue chain is Recombination protein RecR (203 aa).

The C4-type zinc-finger motif lies at 58-73 (CDYCGNLDIVSICNIC). The region spanning 81-177 (STIAVVESVA…KISKLASGIP (97 aa)) is the Toprim domain.

The protein belongs to the RecR family.

In terms of biological role, may play a role in DNA repair. It seems to be involved in an RecBC-independent recombinational process of DNA repair. It may act with RecF and RecO. In Orientia tsutsugamushi (strain Ikeda) (Rickettsia tsutsugamushi), this protein is Recombination protein RecR.